Reading from the N-terminus, the 614-residue chain is Chaperone protein DnaK (614 aa).

T175 carries the post-translational modification Phosphothreonine; by autocatalysis. The tract at residues 577–614 (QAGGAEGAADPNAAAGGAQSAPHDDNVVDADFKVDEDK) is disordered. Residues 583–597 (GAADPNAAAGGAQSA) are compositionally biased toward low complexity. Residues 598 to 614 (PHDDNVVDADFKVDEDK) show a composition bias toward basic and acidic residues.

The protein belongs to the heat shock protein 70 family.

In terms of biological role, acts as a chaperone. The polypeptide is Chaperone protein DnaK (Clostridium beijerinckii (strain ATCC 51743 / NCIMB 8052) (Clostridium acetobutylicum)).